A 130-amino-acid chain; its full sequence is Protein YoeA (130 aa).

The first 28 residues, 1-28 (MLYNIPCRIYILSTLSLCISGIVSTATA), serve as a signal peptide directing secretion. Residues 51-130 (NLWESPATIQ…RCRRYSRGER (80 aa)) form the TBDR plug domain.

It belongs to the TonB-dependent receptor family.

This Escherichia coli (strain K12) protein is Protein YoeA (yoeA).